A 254-amino-acid chain; its full sequence is Vitamin B12 import ATP-binding protein BtuD (254 aa).

In terms of domain architecture, ABC transporter spans 3 to 239 (INYISVGNRL…ENLQQVFETP (237 aa)). 29–36 (GPNGSGKS) contacts ATP.

This sequence belongs to the ABC transporter superfamily. Vitamin B12 importer (TC 3.A.1.13.1) family. As to quaternary structure, the complex is composed of two ATP-binding proteins (BtuD), two transmembrane proteins (BtuC) and a solute-binding protein (BtuF).

Its subcellular location is the cell inner membrane. The enzyme catalyses an R-cob(III)alamin(out) + ATP + H2O = an R-cob(III)alamin(in) + ADP + phosphate + H(+). Functionally, part of the ABC transporter complex BtuCDF involved in vitamin B12 import. Responsible for energy coupling to the transport system. This chain is Vitamin B12 import ATP-binding protein BtuD, found in Vibrio vulnificus (strain CMCP6).